The chain runs to 826 residues: Arf-GAP with ANK repeat and PH domain-containing protein cnt-1 (826 aa).

The PH domain occupies 275–373 (DVMMEGYLYK…WMRALQRTIL (99 aa)). Residues 447 to 572 (TTAFEQVRRV…RFAVAEDTRA (126 aa)) form the Arf-GAP domain. The segment at 462-485 (CADCGSPAPKWVSINLGVVLCIEC) adopts a C4-type zinc-finger fold. Positions 570–604 (TRARSSATNRQEHLKHKTSIGGNSSSNGVNRSSSY) are disordered. Positions 588–603 (SIGGNSSSNGVNRSSS) are enriched in low complexity. ANK repeat units lie at residues 690 to 719 (NGTT…KINM), 723 to 752 (KLNT…DSNL), and 756 to 789 (DSKT…NADF).

As to quaternary structure, interacts (via C-terminal ankyrin repeat) with rab-10 (GTP-bound form); the interaction is required for cnt-1 recruitment to endosomes. Interacts (via C-terminal ankyrin repeat) with rab-8 (GTP-bound form) and rab-35 (GTP-bound form). Cleaved by caspase ced-3 after Asp-382 and Asp-609. Cleavage at Asp-382 is required for subsequent cleavage at Asp-609.

The protein resides in the cytoplasm. Its subcellular location is the recycling endosome membrane. The protein localises to the basolateral cell membrane. It is found in the apical cell membrane. It localises to the cell membrane. Its function is as follows. GTPase-activating protein for the ADP ribosylation factor family. Regulates endosome recycling downstream of rab-10 and upstream of arf-6. In terms of biological role, promotes apoptosis during embryonic development. Produced by caspase ced-3-mediated cleavage, and translocates to the plasma membrane where it prevents the activation of the prosurvival Akt-1/2 and sgk-1 signaling pathway by competing with Akt-1/2 for the binding to PtdIns(3,4,5)P3. In Caenorhabditis elegans, this protein is Arf-GAP with ANK repeat and PH domain-containing protein cnt-1.